A 631-amino-acid polypeptide reads, in one-letter code: Probable protein phosphatase 2C 31 (631 aa).

2 disordered regions span residues 119-142 (GPLHATSGRFSEASGSASTASDRF) and 205-231 (LSGRRSNGPAEPTTKSDGDYRSTPKGN). The segment covering 131–140 (ASGSASTASD) has biased composition (polar residues). Residues 221 to 622 (DGDYRSTPKG…DDVSIIVMSF (402 aa)) form the PPM-type phosphatase domain. Residues D261 and G262 each contribute to the Mn(2+) site. The interval 324-347 (GGDDDPDAERKAKRGRIERNADDD) is disordered. Mn(2+)-binding residues include D550 and D613.

The protein belongs to the PP2C family. The cofactor is Mg(2+). Mn(2+) serves as cofactor.

The enzyme catalyses O-phospho-L-seryl-[protein] + H2O = L-seryl-[protein] + phosphate. It carries out the reaction O-phospho-L-threonyl-[protein] + H2O = L-threonyl-[protein] + phosphate. This Oryza sativa subsp. japonica (Rice) protein is Probable protein phosphatase 2C 31.